Consider the following 145-residue polypeptide: Large ribosomal subunit protein bL17 (145 aa).

It belongs to the bacterial ribosomal protein bL17 family. Part of the 50S ribosomal subunit. Contacts protein L32.

The chain is Large ribosomal subunit protein bL17 from Francisella tularensis subsp. tularensis (strain FSC 198).